Here is a 393-residue protein sequence, read N- to C-terminus: Arginine--pyruvate transaminase AruH (393 aa).

K237 carries the post-translational modification N6-(pyridoxal phosphate)lysine.

Belongs to the class-I pyridoxal-phosphate-dependent aminotransferase family. Homodimer. Requires pyridoxal 5'-phosphate as cofactor.

It catalyses the reaction L-arginine + pyruvate = 5-guanidino-2-oxopentanoate + L-alanine. It functions in the pathway amino-acid degradation; L-arginine degradation. Its function is as follows. Catalyzes the conversion of L-arginine into 2-ketoarginine via transamination. L-arginine is the best substrate, but it can also use L-lysine, L-methionine, L-leucine, ornithine and L-glutamine, which indicates that it may have a broader physiological function in amino acid catabolism. This Pseudomonas aeruginosa (strain ATCC 15692 / DSM 22644 / CIP 104116 / JCM 14847 / LMG 12228 / 1C / PRS 101 / PAO1) protein is Arginine--pyruvate transaminase AruH (aruH).